Here is a 395-residue protein sequence, read N- to C-terminus: Acid ceramidase (395 aa).

Residues Met-1–Ala-21 form the signal peptide. A disulfide bridge links Cys-31 with Cys-340. Residue Cys-143 is the Nucleophile of the active site. Asn-173, Asn-195, Asn-259, Asn-286, Asn-342, and Asn-348 each carry an N-linked (GlcNAc...) asparagine glycan. A disulfide bridge links Cys-388 with Cys-392.

This sequence belongs to the acid ceramidase family. Heterodimer; disulfide-linked. The heterodimer is composed of the disulfide-linked alpha and beta chains produced by autocatalytic cleavage of the precursor. Isoform 2: May interact with NR5A1 in the nucleus; the direct interaction would negatively regulate NR5A1 transcriptional activity. In terms of processing, N-glycosylated. Post-translationally, proteolytically cleaved into two chains alpha and beta that remain associated via a disulfide bond. Cleavage gives rise to a conformation change that activates the enzyme. The same catalytic Cys residue mediates the autoproteolytic cleavage and subsequent hydrolysis of lipid substrates. The beta chain may undergo an additional C-terminal processing. Broadly expressed with higher expression in heart.

Its subcellular location is the lysosome. The protein resides in the secreted. It is found in the nucleus. It localises to the cytoplasm. It catalyses the reaction an N-acylsphing-4-enine + H2O = sphing-4-enine + a fatty acid. It carries out the reaction a beta-D-glucosyl-(1&lt;-&gt;1')-N-acylsphing-4-enine + H2O = beta-D-glucosyl-(1&lt;-&gt;1)-sphing-4-enine + a fatty acid. The enzyme catalyses a globoside Gb3Cer + H2O = a lysoGb3 + a fatty acid. The catalysed reaction is a globoside Gb3Cer (d18:1(4E)) + H2O = a lysoGb3(d18:1(4E)) + a fatty acid. It catalyses the reaction N-dodecanoylsphing-4-enine + H2O = dodecanoate + sphing-4-enine. It carries out the reaction N-tetradecanoylsphing-4-enine + H2O = tetradecanoate + sphing-4-enine. The enzyme catalyses N-hexadecanoylsphing-4-enine + H2O = sphing-4-enine + hexadecanoate. The catalysed reaction is N-octadecanoylsphing-4-enine + H2O = sphing-4-enine + octadecanoate. It catalyses the reaction N-dodecanoyl-(4R)-hydroxysphinganine + H2O = (4R)-hydroxysphinganine + dodecanoate. It carries out the reaction N-(dodecanoyl)-sphinganine + H2O = dodecanoate + sphinganine. The enzyme catalyses N-(acetyl)-sphing-4-enine + H2O = sphing-4-enine + acetate. The catalysed reaction is N-(hexanoyl)sphing-4-enine + H2O = hexanoate + sphing-4-enine. It catalyses the reaction N-octanoylsphing-4-enine + H2O = octanoate + sphing-4-enine. It carries out the reaction N-(9Z-octadecenoyl)-sphing-4-enine + H2O = sphing-4-enine + (9Z)-octadecenoate. The enzyme catalyses N-dodecanoylethanolamine + H2O = dodecanoate + ethanolamine. The protein operates within lipid metabolism; sphingolipid metabolism. With respect to regulation, activated by Ca(2+), Mg(2+) and Na(+) cations. Inhibited by Zn(2+). Phosphatidylserine and phosphatidic acid stimulate while cardiolipin, phosphatidylcholine, lysophosphatidylcholine, phosphatidylethanolamine, phosphatidylinositol and sphingomyelin inhibit the reverse ceramide synthase activity. Phosphatidic acid, phosphatidylinositol and C16-ceramide inhibit the ceramidase/hydrolase activity. Functionally, lysosomal ceramidase that hydrolyzes sphingolipid ceramides into sphingosine and free fatty acids at acidic pH. Ceramides, sphingosine, and its phosphorylated form sphingosine-1-phosphate are bioactive lipids that mediate cellular signaling pathways regulating several biological processes including cell proliferation, apoptosis and differentiation. Has a higher catalytic efficiency towards C12-ceramides versus other ceramides. Also catalyzes the reverse reaction allowing the synthesis of ceramides from fatty acids and sphingosine. For the reverse synthetic reaction, the natural sphingosine D-erythro isomer is more efficiently utilized as a substrate compared to D-erythro-dihydrosphingosine and D-erythro-phytosphingosine, while the fatty acids with chain lengths of 12 or 14 carbons are the most efficiently used. Also has an N-acylethanolamine hydrolase activity. By regulating the levels of ceramides, sphingosine and sphingosine-1-phosphate in the epidermis, mediates the calcium-induced differentiation of epidermal keratinocytes. Also indirectly regulates tumor necrosis factor/TNF-induced apoptosis. By regulating the intracellular balance between ceramides and sphingosine, in adrenocortical cells, probably also acts as a regulator of steroidogenesis. Its function is as follows. May directly regulate steroidogenesis by binding the nuclear receptor NR5A1 and negatively regulating its transcriptional activity. The chain is Acid ceramidase from Homo sapiens (Human).